Reading from the N-terminus, the 295-residue chain is tRNA-cytidine(32) 2-sulfurtransferase (295 aa).

The short motif at 59–64 is the PP-loop motif element; it reads SGGKDS. Cys-134, Cys-137, and Cys-225 together coordinate [4Fe-4S] cluster.

Belongs to the TtcA family. In terms of assembly, homodimer. Requires Mg(2+) as cofactor. [4Fe-4S] cluster serves as cofactor.

Its subcellular location is the cytoplasm. It carries out the reaction cytidine(32) in tRNA + S-sulfanyl-L-cysteinyl-[cysteine desulfurase] + AH2 + ATP = 2-thiocytidine(32) in tRNA + L-cysteinyl-[cysteine desulfurase] + A + AMP + diphosphate + H(+). It functions in the pathway tRNA modification. Catalyzes the ATP-dependent 2-thiolation of cytidine in position 32 of tRNA, to form 2-thiocytidine (s(2)C32). The sulfur atoms are provided by the cysteine/cysteine desulfurase (IscS) system. This chain is tRNA-cytidine(32) 2-sulfurtransferase, found in Ruegeria sp. (strain TM1040) (Silicibacter sp.).